A 205-amino-acid chain; its full sequence is Type III pantothenate kinase (205 aa).

Residue 5-12 (DIGNTTYH) participates in ATP binding. Substrate-binding positions include Tyr68 and 72-75 (GIDR). The active-site Proton acceptor is Asp74. Asp89 is a K(+) binding site. Ser92 lines the ATP pocket. Ser144 is a substrate binding site.

This sequence belongs to the type III pantothenate kinase family. As to quaternary structure, homodimer. Requires NH4(+) as cofactor. K(+) is required as a cofactor.

The protein resides in the cytoplasm. It catalyses the reaction (R)-pantothenate + ATP = (R)-4'-phosphopantothenate + ADP + H(+). It functions in the pathway cofactor biosynthesis; coenzyme A biosynthesis; CoA from (R)-pantothenate: step 1/5. In terms of biological role, catalyzes the phosphorylation of pantothenate (Pan), the first step in CoA biosynthesis. The chain is Type III pantothenate kinase from Sulfurimonas denitrificans (strain ATCC 33889 / DSM 1251) (Thiomicrospira denitrificans (strain ATCC 33889 / DSM 1251)).